A 398-amino-acid polypeptide reads, in one-letter code: Ornithine aminotransferase (398 aa).

Position 256 is an N6-(pyridoxal phosphate)lysine (Lys256).

It belongs to the class-III pyridoxal-phosphate-dependent aminotransferase family. OAT subfamily. The cofactor is pyridoxal 5'-phosphate.

It is found in the cytoplasm. It catalyses the reaction a 2-oxocarboxylate + L-ornithine = L-glutamate 5-semialdehyde + an L-alpha-amino acid. Its pathway is amino-acid biosynthesis; L-proline biosynthesis; L-glutamate 5-semialdehyde from L-ornithine: step 1/1. Its function is as follows. Catalyzes the interconversion of ornithine to glutamate semialdehyde. The polypeptide is Ornithine aminotransferase (Halalkalibacterium halodurans (strain ATCC BAA-125 / DSM 18197 / FERM 7344 / JCM 9153 / C-125) (Bacillus halodurans)).